The chain runs to 146 residues: Snaclec agkisacutacin subunit B (146 aa).

An N-terminal signal peptide occupies residues 1-23 (MGRFIFVSFGLLVVFLSLSGTAA). Positions 24-146 (DCPSDWSSYE…TCSFVCKFQA (123 aa)) constitute a C-type lectin domain. Cystine bridges form between C25-C36, C53-C142, and C119-C134. Positions 64 and 70 each coordinate Ca(2+).

It belongs to the snaclec family. As to quaternary structure, heterodimer of subunits A and B; disulfide-linked. Expressed by the venom gland.

The protein resides in the secreted. Functionally, anticoagulant protein which binds to the gamma-carboxyglutamic acid-domain regions of factor IX (F9) and factor X (F10) in the presence of calcium with a 1 to 1 stoichiometry. Also inhibits platelet aggregation by binding to platelet glycoprotein Ibalpha (GP1BA) and functioning as a blocker of von Willebrand factor (VWF). Is devoid of hemorrhagic and lethal activities. Possesses antithrombotic and thrombolytic activities. Also hydrolyzes the Aalpha-chain of fibrinogen (FGA). Does not affect the Bbeta-chain (FGB) and the gamma chain (FGG). This Deinagkistrodon acutus (Hundred-pace snake) protein is Snaclec agkisacutacin subunit B.